Consider the following 82-residue polypeptide: uncharacterized protein (82 aa).

This is an uncharacterized protein from Bacillus subtilis (strain 168).